The following is a 154-amino-acid chain: Aspartate carbamoyltransferase regulatory chain (154 aa).

Cys109, Cys114, Cys138, and Cys141 together coordinate Zn(2+).

Belongs to the PyrI family. Contains catalytic and regulatory chains. Zn(2+) serves as cofactor.

Involved in allosteric regulation of aspartate carbamoyltransferase. This Yersinia pseudotuberculosis serotype O:1b (strain IP 31758) protein is Aspartate carbamoyltransferase regulatory chain.